A 406-amino-acid polypeptide reads, in one-letter code: Peptidase T (406 aa).

His80 contacts Zn(2+). The active site involves Asp82. Asp141 is a binding site for Zn(2+). Glu175 serves as the catalytic Proton acceptor. Zn(2+)-binding residues include Glu176, Asp198, and His380.

Belongs to the peptidase M20B family. It depends on Zn(2+) as a cofactor.

The protein localises to the cytoplasm. The catalysed reaction is Release of the N-terminal residue from a tripeptide.. Functionally, cleaves the N-terminal amino acid of tripeptides. This is Peptidase T from Streptococcus mutans serotype c (strain ATCC 700610 / UA159).